Consider the following 431-residue polypeptide: MSEIQSVIAREVIDSRGNPTVEAEVTTLSGTGRAAVPSGASTGEHEAVELRDGDKKRFLGKGVLTAVKNIETVLGPAVLGMDALDQAELDKVLIQADGSPNKSKLGANAILAVSMAAARAAADTVDLPLWRYLGGAAARVLPTPLMNILNGGVHADNGLEIQEFMIVPYGAESFAEALRTGAEIFHTLRGLLKKDGMVTAVGDEGGFAPRLPSNRAALEYVVRAIEAAGHRPGEDVGVALDSALSEFYDAKTERYTFDKQQKTREEIVAIYDELAKAFPIVSIEDGVAENDEKGWRLLTERLGKKVQLVGDDLFVTNPARLAKGIEDGLANAILIKLNQIGTVTETLECIRQAAEGGYRSIISHRSGETEDTFIADLAVATNAGQIKTGSASRSDRVAKYNQLLRISYALGDGQVFAGRAPFRRPGAKRSS.

Gln-162 lines the (2R)-2-phosphoglycerate pocket. The Proton donor role is filled by Glu-204. Asp-241, Glu-284, and Asp-311 together coordinate Mg(2+). (2R)-2-phosphoglycerate contacts are provided by Lys-336, Arg-365, Ser-366, and Lys-387. The Proton acceptor role is filled by Lys-336.

It belongs to the enolase family. Mg(2+) is required as a cofactor.

The protein localises to the cytoplasm. Its subcellular location is the secreted. It is found in the cell surface. The catalysed reaction is (2R)-2-phosphoglycerate = phosphoenolpyruvate + H2O. It participates in carbohydrate degradation; glycolysis; pyruvate from D-glyceraldehyde 3-phosphate: step 4/5. Functionally, catalyzes the reversible conversion of 2-phosphoglycerate (2-PG) into phosphoenolpyruvate (PEP). It is essential for the degradation of carbohydrates via glycolysis. This chain is Enolase, found in Sorangium cellulosum (strain So ce56) (Polyangium cellulosum (strain So ce56)).